Consider the following 440-residue polypeptide: IAA-amino acid hydrolase ILR1-like 4 (440 aa).

Residues 1–23 (MSFFKWVSFVLILHLLNPTLISC) form the signal peptide. C134, H136, E170, H194, and H397 together coordinate Mn(2+). Positions 437–440 (KDEL) match the Prevents secretion from ER motif.

This sequence belongs to the peptidase M20 family. The cofactor is Mn(2+). As to expression, expressed in leaves, stems, roots, siliques and flowers. Detected in the vascular tissue of cotyledons and roots, in adult leaves, stems, siliques, petals, hydathodes and in silique abscission zones and funicles.

Its subcellular location is the endoplasmic reticulum lumen. It carries out the reaction a jasmonyl-L-amino acid + H2O = a jasmonate + an L-alpha-amino acid. Its function is as follows. Hydrolyzes certain amino acid conjugates of the plant growth regulator indole-3-acetic acid (IAA), including IAA-Ala, IAA-Asn, IAA-Cys, IAA-Glu, IAA-Met, IAA-Ser and IAA-Gly. Has a lower efficiency with IAA-Phe, IAA-Leu and IAA-Val and no activity with IAA-Ile. Important for IAA-Leu hydrolysis in roots. Also hydrolyzes amino acid conjugates of jasmonic acid and 12-hydroxy jasmonic acid. The protein is IAA-amino acid hydrolase ILR1-like 4 of Arabidopsis thaliana (Mouse-ear cress).